The chain runs to 493 residues: MHNPRLFLSRAGFFSKPGLLPWDTGRPPDLSQSLLGRAYKGSFTSVIAKKHPSRQKYQKKQRHCRDDSWQERLADVVTPLWRLSYEAQLKVKFEAQKKLLQSLESHLKVLHGVSDTVAAHQSEGLRCLLHPIIPSPTTTGYRNKSTFSVYRSPDGNPKTVGYYLGTWKDGNVVCLPCNHLKNIPEKHSQVAQYYEVFLRQSSVEPCLLFHEGGHWRELVVRTNRQGHTMAIVTFHPQGLSEEEVCVQKVTLKDFFTKGPGAICELTSLYFQESTMTRCSHQQSPYQLLFGEPHIFEDLLGLKIRISPDAFFQINTAGAEMLYRIIGELSGVNSESLLLDICCGTGVIGLSVAQRASQVHGIELVEQAVEDARWTAAFNGVTNCEFHAGRAETILPQLLKSQKDEKLTVAVVNPARAGLHYRVVRAIRNCRTIHTLVFVSCKPHGESTRNFIELCCPPNSAKQLLGDPFVLREAVPVDLFPHTPHCELVLLFTR.

Residues 1-14 (MHNPRLFLSRAGFF) constitute a mitochondrion transit peptide. S-adenosyl-L-methionine contacts are provided by Q312, E362, and N412. C440 acts as the Nucleophile in catalysis. The Proton acceptor role is filled by E486.

The protein belongs to the class I-like SAM-binding methyltransferase superfamily. RNA M5U methyltransferase family.

Its subcellular location is the mitochondrion matrix. It carries out the reaction uridine(54) in tRNA + S-adenosyl-L-methionine = 5-methyluridine(54) in tRNA + S-adenosyl-L-homocysteine + H(+). The catalysed reaction is a uridine in 12S rRNA + S-adenosyl-L-methionine = a 5-methyluridine in 12S rRNA + S-adenosyl-L-homocysteine + H(+). Functionally, mitochondrial S-adenosyl-L-methionine-dependent methyltransferase that catalyzes the formation of 5-methyl-uridine in tRNAs and 12S rRNA. Catalyzes the methylation of uridine at position 54 (m5U54) in all tRNAs. Specifically methylates the uridine in position 425 of 12S rRNA (m5U425). Does not affect RNA stability or mitochondrial translation. This chain is tRNA (uracil-5-)-methyltransferase homolog B, found in Mus musculus (Mouse).